Here is a 299-residue protein sequence, read N- to C-terminus: ATP phosphoribosyltransferase (299 aa).

It belongs to the ATP phosphoribosyltransferase family. Long subfamily. Requires Mg(2+) as cofactor.

It is found in the cytoplasm. The catalysed reaction is 1-(5-phospho-beta-D-ribosyl)-ATP + diphosphate = 5-phospho-alpha-D-ribose 1-diphosphate + ATP. It functions in the pathway amino-acid biosynthesis; L-histidine biosynthesis; L-histidine from 5-phospho-alpha-D-ribose 1-diphosphate: step 1/9. Feedback inhibited by histidine. Functionally, catalyzes the condensation of ATP and 5-phosphoribose 1-diphosphate to form N'-(5'-phosphoribosyl)-ATP (PR-ATP). Has a crucial role in the pathway because the rate of histidine biosynthesis seems to be controlled primarily by regulation of HisG enzymatic activity. In Shewanella baltica (strain OS155 / ATCC BAA-1091), this protein is ATP phosphoribosyltransferase.